A 274-amino-acid polypeptide reads, in one-letter code: Sulfur carrier protein FdhD (274 aa).

Cys120 acts as the Cysteine persulfide intermediate in catalysis.

It belongs to the FdhD family.

Its subcellular location is the cytoplasm. Required for formate dehydrogenase (FDH) activity. Acts as a sulfur carrier protein that transfers sulfur from IscS to the molybdenum cofactor prior to its insertion into FDH. This chain is Sulfur carrier protein FdhD, found in Burkholderia mallei (strain ATCC 23344).